The sequence spans 247 residues: L-cystine import ATP-binding protein TcyC (247 aa).

Residues 2–240 (LTVKGLNKSF…PKEERTQRFL (239 aa)) form the ABC transporter domain. 34–41 (GPSGSGKT) is a binding site for ATP.

It belongs to the ABC transporter superfamily. L-cystine importer (TC 3.A.1.3.14) family. As to quaternary structure, the complex is composed of two ATP-binding proteins (TcyC), two transmembrane proteins (TcyB) and a solute-binding protein (TcyA).

The protein resides in the cell membrane. Its function is as follows. Part of the ABC transporter complex TcyABC involved in L-cystine import. Responsible for energy coupling to the transport system. The protein is L-cystine import ATP-binding protein TcyC (tcyC) of Bacillus subtilis (strain 168).